Reading from the N-terminus, the 329-residue chain is Vitamin B12 import system permease protein BtuC (329 aa).

The next 9 helical transmembrane spans lie at 18–38 (WLLS…CAGE), 64–84 (LAVL…QALF), 91–111 (PGLL…VLLG), 115–135 (LPGW…TLIL), 149–169 (LLAG…AIYF), 191–208 (WQQS…IWIC), 243–263 (GWMV…GLVI), 277–297 (VLLP…DVVA), and 305–325 (ELPI…WLLL).

This sequence belongs to the binding-protein-dependent transport system permease family. FecCD subfamily. In terms of assembly, the complex is composed of two ATP-binding proteins (BtuD), two transmembrane proteins (BtuC) and a solute-binding protein (BtuF).

The protein localises to the cell inner membrane. Part of the ABC transporter complex BtuCDF involved in vitamin B12 import. Involved in the translocation of the substrate across the membrane. This is Vitamin B12 import system permease protein BtuC from Salmonella arizonae (strain ATCC BAA-731 / CDC346-86 / RSK2980).